The chain runs to 320 residues: Lipoyl synthase (320 aa).

Cys67, Cys72, Cys78, Cys93, Cys97, Cys100, and Ser307 together coordinate [4Fe-4S] cluster. Positions 79–296 constitute a Radical SAM core domain; it reads FNHGTATFMI…REKAAEMGFE (218 aa).

It belongs to the radical SAM superfamily. Lipoyl synthase family. [4Fe-4S] cluster is required as a cofactor.

Its subcellular location is the cytoplasm. It catalyses the reaction [[Fe-S] cluster scaffold protein carrying a second [4Fe-4S](2+) cluster] + N(6)-octanoyl-L-lysyl-[protein] + 2 oxidized [2Fe-2S]-[ferredoxin] + 2 S-adenosyl-L-methionine + 4 H(+) = [[Fe-S] cluster scaffold protein] + N(6)-[(R)-dihydrolipoyl]-L-lysyl-[protein] + 4 Fe(3+) + 2 hydrogen sulfide + 2 5'-deoxyadenosine + 2 L-methionine + 2 reduced [2Fe-2S]-[ferredoxin]. The protein operates within protein modification; protein lipoylation via endogenous pathway; protein N(6)-(lipoyl)lysine from octanoyl-[acyl-carrier-protein]: step 2/2. Functionally, catalyzes the radical-mediated insertion of two sulfur atoms into the C-6 and C-8 positions of the octanoyl moiety bound to the lipoyl domains of lipoate-dependent enzymes, thereby converting the octanoylated domains into lipoylated derivatives. The chain is Lipoyl synthase from Actinobacillus succinogenes (strain ATCC 55618 / DSM 22257 / CCUG 43843 / 130Z).